Reading from the N-terminus, the 897-residue chain is Probable basic-leucine zipper transcription factor R (897 aa).

Disordered stretches follow at residues 38-88 and 128-198; these read DDNI…NIET and YQQR…NSNS. The span at 44-75 shows a compositional bias: low complexity; that stretch reads NNNNNNNNNNNNNNNNNNNNNNNNNNNNNNNN. Polar residues predominate over residues 76 to 88; sequence IGSPQIMNENIET. The stretch at 94–137 forms a coiled coil; sequence QYLERLQSIQQQQHQCQTQIQQQLQNYQQQYEDQYQQRQQQYQD. The span at 128–140 shows a compositional bias: low complexity; the sequence is YQQRQQQYQDQYQ. Over residues 141–157 the composition is skewed to polar residues; sequence KPYSSPPLNFNSIPPIT. A compositionally biased stretch (low complexity) spans 158–198; sequence NNNNNNNNNNNNNNNNNNSNSNSNSNSNSNSNSNSNSNSNS. Coiled coils occupy residues 228–258 and 330–407; these read LQQQ…QQQQ and QQLQ…QQQQ. The segment at 461 to 516 is disordered; it reads LQLPTPFYSPQQQQQQHTPISSFIPPPSLPSSPPSPPSPPSPPPQQQQQQQQQQQQ. Residues 484–505 are compositionally biased toward pro residues; that stretch reads IPPPSLPSSPPSPPSPPSPPPQ. A compositionally biased stretch (low complexity) spans 506–516; sequence QQQQQQQQQQQ. One can recognise a bZIP domain in the interval 557–620; sequence ESKESIKKYN…SIEMMRMEPE (64 aa). Positions 559-564 are basic motif; that stretch reads KESIKK. The interval 569-576 is leucine-zipper; that stretch reads IASRNYRL.

This sequence belongs to the bZIP family.

The protein resides in the nucleus. In terms of biological role, probable transcriptional regulator. The polypeptide is Probable basic-leucine zipper transcription factor R (bzpR) (Dictyostelium discoideum (Social amoeba)).